A 354-amino-acid chain; its full sequence is Uroporphyrinogen decarboxylase (354 aa).

Substrate-binding positions include 27–31 (RQAGR), Asp77, Tyr154, Thr209, and His327.

It belongs to the uroporphyrinogen decarboxylase family. Homodimer.

Its subcellular location is the cytoplasm. The enzyme catalyses uroporphyrinogen III + 4 H(+) = coproporphyrinogen III + 4 CO2. It participates in porphyrin-containing compound metabolism; protoporphyrin-IX biosynthesis; coproporphyrinogen-III from 5-aminolevulinate: step 4/4. Catalyzes the decarboxylation of four acetate groups of uroporphyrinogen-III to yield coproporphyrinogen-III. The chain is Uroporphyrinogen decarboxylase from Shigella flexneri serotype 5b (strain 8401).